We begin with the raw amino-acid sequence, 138 residues long: Large ribosomal subunit protein uL16 (138 aa).

Residues 1–17 show a composition bias toward basic residues; sequence MLQPKRTKFRKQHKGRN. Positions 1–22 are disordered; sequence MLQPKRTKFRKQHKGRNRGVAT.

Belongs to the universal ribosomal protein uL16 family. As to quaternary structure, part of the 50S ribosomal subunit.

Its function is as follows. Binds 23S rRNA and is also seen to make contacts with the A and possibly P site tRNAs. This is Large ribosomal subunit protein uL16 from Acidithiobacillus ferrooxidans (strain ATCC 23270 / DSM 14882 / CIP 104768 / NCIMB 8455) (Ferrobacillus ferrooxidans (strain ATCC 23270)).